Here is a 370-residue protein sequence, read N- to C-terminus: MFYYLYDLYFNHLDSLRIFSYVTFRALMAGLTSMFVTFWLGHKVIDFLYGLKFRESVRDDGPKSHESKKGTPTMGGLLIIGSLLLSVLLWGNLKNSNIIVLSVFALCFSALGFADDYMKSVKKIKGGMKARTKFLLSILISLVFCILFFYYTGVIPTGHSGKIPFQITDLFFPFVKGPVLALGVFAIPFSILVIIGSSHAVNLTDGLDGLATGTVAISVVTLGIIAYVSGTPITANYLNIPYLPGAHEYSVFLSALAGALFGFLWFNAHPAQVFMGDTGSLFLGATLGMIVILLKKEILLLILGAIFVSEALSVILQVGSFKLTGKRIFKMAPLHHHFELGGVKETKIVIRFWIIAVILAIISLSTLKIQ.

The next 10 membrane-spanning stretches (helical) occupy residues 31–51 (LTSM…LYGL), 73–93 (TMGG…WGNL), 98–118 (IIVL…DDYM), 135–155 (LLSI…TGVI), 177–197 (GPVL…IIGS), 209–229 (GLAT…AYVS), 251–271 (VFLS…AHPA), 273–293 (VFMG…IVIL), 298–318 (ILLL…ILQV), and 347–367 (KIVI…LSTL).

Belongs to the glycosyltransferase 4 family. MraY subfamily. Requires Mg(2+) as cofactor.

The protein localises to the cell inner membrane. The catalysed reaction is UDP-N-acetyl-alpha-D-muramoyl-L-alanyl-gamma-D-glutamyl-meso-2,6-diaminopimeloyl-D-alanyl-D-alanine + di-trans,octa-cis-undecaprenyl phosphate = di-trans,octa-cis-undecaprenyl diphospho-N-acetyl-alpha-D-muramoyl-L-alanyl-D-glutamyl-meso-2,6-diaminopimeloyl-D-alanyl-D-alanine + UMP. The protein operates within cell wall biogenesis; peptidoglycan biosynthesis. Its function is as follows. Catalyzes the initial step of the lipid cycle reactions in the biosynthesis of the cell wall peptidoglycan: transfers peptidoglycan precursor phospho-MurNAc-pentapeptide from UDP-MurNAc-pentapeptide onto the lipid carrier undecaprenyl phosphate, yielding undecaprenyl-pyrophosphoryl-MurNAc-pentapeptide, known as lipid I. The protein is Phospho-N-acetylmuramoyl-pentapeptide-transferase of Leptospira borgpetersenii serovar Hardjo-bovis (strain JB197).